Here is a 115-residue protein sequence, read N- to C-terminus: Large ribosomal subunit protein uL18 (115 aa).

The protein belongs to the universal ribosomal protein uL18 family. As to quaternary structure, part of the 50S ribosomal subunit; part of the 5S rRNA/L5/L18/L25 subcomplex. Contacts the 5S and 23S rRNAs.

In terms of biological role, this is one of the proteins that bind and probably mediate the attachment of the 5S RNA into the large ribosomal subunit, where it forms part of the central protuberance. In Ruthia magnifica subsp. Calyptogena magnifica, this protein is Large ribosomal subunit protein uL18.